The chain runs to 895 residues: La RNA-binding domain-containing protein LHP1 (895 aa).

Disordered regions lie at residues 24 to 265, 285 to 344, 359 to 590, 796 to 857, and 870 to 895; these read ANGN…PPPS, SATS…HDAT, GEDK…LGHG, PDAA…AQDV, and VNGE…NYEQ. A compositionally biased stretch (low complexity) spans 31–75; it reads SSPSSSSSATPEPTSLSSSTSGKKAFSTATSKSGQQKQGSSPQPG. Residues 95–143 are compositionally biased toward basic and acidic residues; sequence QRTDRSEEKEKRGSSSKNWRERSHRDEKNQDDGEKRNGRERSKKEKGDK. A compositionally biased stretch (low complexity) spans 152–170; that stretch reads SATSSEKTAKSLSSSTKNA. Polar residues-rich tracts occupy residues 172-184 and 192-216; these read GVTS…NPIA and KAQN…STIN. Residues 228 to 244 are compositionally biased toward basic and acidic residues; that stretch reads DNWRARPAKVEKNEKTE. Over residues 251 to 260 the composition is skewed to low complexity; that stretch reads QAQPQPQRQL. Over residues 296 to 314 the composition is skewed to basic and acidic residues; the sequence is KSDKEKSLTNGMVKEEDSG. Residues 325-336 show a composition bias toward low complexity; that stretch reads AAAAAAAGTSST. Composition is skewed to basic and acidic residues over residues 359-371, 405-428, 452-468, and 485-495; these read GEDK…ERLN, HAAE…REGG, EGKK…DGHA, and GDVKETKEGDA. Over residues 496-508 the composition is skewed to low complexity; it reads RSASQQESSSHRS. The segment covering 510–521 has biased composition (polar residues); that stretch reads PSISASANTGID. The span at 563–572 shows a compositional bias: gly residues; sequence RGSFGGGRAR. The HTH La-type RNA-binding domain occupies 706–796; the sequence is VPNLDPLRFY…GAESHRWVLP (91 aa). Phosphoserine is present on S847. The segment covering 873–884 has biased composition (basic and acidic residues); it reads EIKEKEEVKAME. Acidic residues predominate over residues 885 to 895; that stretch reads NEGEESENYEQ.

In terms of biological role, may act as an RNA-binding protein. This is La RNA-binding domain-containing protein LHP1 from Cryptococcus neoformans var. grubii serotype A (strain H99 / ATCC 208821 / CBS 10515 / FGSC 9487) (Filobasidiella neoformans var. grubii).